A 423-amino-acid polypeptide reads, in one-letter code: Histidine--tRNA ligase (423 aa).

This sequence belongs to the class-II aminoacyl-tRNA synthetase family. In terms of assembly, homodimer.

The protein resides in the cytoplasm. It catalyses the reaction tRNA(His) + L-histidine + ATP = L-histidyl-tRNA(His) + AMP + diphosphate + H(+). In Phytoplasma mali (strain AT), this protein is Histidine--tRNA ligase.